Consider the following 434-residue polypeptide: Chaperone SurA (434 aa).

Residues M1–A20 form the signal peptide. PpiC domains lie at D171 to D272 and V282 to D382.

The protein resides in the periplasm. It catalyses the reaction [protein]-peptidylproline (omega=180) = [protein]-peptidylproline (omega=0). Functionally, chaperone involved in the correct folding and assembly of outer membrane proteins. Recognizes specific patterns of aromatic residues and the orientation of their side chains, which are found more frequently in integral outer membrane proteins. May act in both early periplasmic and late outer membrane-associated steps of protein maturation. This is Chaperone SurA from Yersinia pestis bv. Antiqua (strain Nepal516).